Reading from the N-terminus, the 273-residue chain is Nicotinamide N-methyltransferase (273 aa).

S-adenosyl-L-methionine contacts are provided by residues tyrosine 35, tyrosine 40, 74 to 75 (GA), tyrosine 80, aspartate 96, asparagine 101, and 152 to 153 (NV).

Belongs to the class I-like SAM-binding methyltransferase superfamily. NNMT/PNMT/TEMT family.

It catalyses the reaction nicotinamide + S-adenosyl-L-methionine = 1-methylnicotinamide + S-adenosyl-L-homocysteine. In terms of biological role, catalyzes the N-methylation of nicotinamide and other pyridines to form pyridinium ions. Involved in regulation of lifespan extension downstream of the sirtuin sir-2.1, probably through its role in nicotinic acid metabolism. In Caenorhabditis elegans, this protein is Nicotinamide N-methyltransferase.